Consider the following 513-residue polypeptide: Aromatic amino acid aminotransferase 2 (513 aa).

A phosphoserine mark is found at S90 and S92. Pyridoxal 5'-phosphate-binding positions include Y102, 143–144 (SN), N232, Y263, and 314–316 (TFS). N232 is a substrate binding site. K317 is subject to N6-(pyridoxal phosphate)lysine. R324 is a pyridoxal 5'-phosphate binding site. A substrate-binding site is contributed by R481.

Belongs to the class-I pyridoxal-phosphate-dependent aminotransferase family. Pyridoxal 5'-phosphate is required as a cofactor.

It is found in the cytoplasm. The enzyme catalyses an aromatic L-alpha-amino acid + 2-oxoglutarate = an aromatic oxo-acid + L-glutamate. It catalyses the reaction an aromatic L-alpha-amino acid + 4-methylsulfanyl-2-oxobutanoate = an aromatic oxo-acid + L-methionine. The catalysed reaction is L-kynurenine + 2-oxoglutarate = kynurenate + L-glutamate + H2O. It functions in the pathway amino-acid biosynthesis; L-methionine biosynthesis via salvage pathway; L-methionine from S-methyl-5-thio-alpha-D-ribose 1-phosphate: step 6/6. Its pathway is amino-acid degradation; L-kynurenine degradation; kynurenate from L-kynurenine: step 1/2. Functionally, general aromatic amino acid transaminase involved in several otherwise unrelated metabolic pathways. Mainly involved in tryptophan degradation. Active with phenylalanine, tyrosine and tryptophan as amino donors and with phenylpyruvate, hydroxyphenylpyruvate and pyruvate as amino acceptors. Does not accept glutamate or 2-oxoglutarate as substrates. Also active with methionine, leucine, glutamine and kynurenine. Catalyzes the formation of methionine from 2-keto-4-methylthiobutyrate (KMTB) in the methionine salvage pathway primarily using aromatic amino acids (tyrosine, phenylalanine and tryptophan) as the amino donors. Catalyzes the irreversible transamination of the L-tryptophan metabolite L-kynurenine to form kynurenic acid (KA) with pyruvate as amino acceptor. The chain is Aromatic amino acid aminotransferase 2 from Saccharomyces cerevisiae (strain ATCC 204508 / S288c) (Baker's yeast).